Consider the following 941-residue polypeptide: RNA-binding protein 4F (941 aa).

Basic and acidic residues predominate over residues 1-13; that stretch reads MDADKQLERQLEK. The interval 1 to 149 is disordered; that stretch reads MDADKQLERQ…DSDNAGGGNQ (149 aa). Residues 14–32 are compositionally biased toward acidic residues; it reads ELDEMPAEDLDDDAYDEYD. Residues 42–52 are compositionally biased toward polar residues; sequence GSPQQGHSESP. At Ser43 the chain carries Phosphoserine. A compositionally biased stretch (basic and acidic residues) spans 55–65; the sequence is EEEHKSEELRQ. The segment covering 87 to 98 has biased composition (acidic residues); the sequence is SSDDEPSVEETE. A compositionally biased stretch (low complexity) spans 111–134; that stretch reads DSSSSSDDVGVIEGSELESNSEVS. Ser153 is modified (phosphoserine). The interval 629-713 is disordered; sequence RSRIKPNSQS…GPANAEAKES (85 aa). Low complexity predominate over residues 671 to 680; it reads EQQQQQQQQQ. Position 713 is a phosphoserine (Ser713). Tyr717 carries the phosphotyrosine modification. Ser718 bears the Phosphoserine mark. One can recognise an RRM domain in the interval 724–801; it reads NKIFVRNLHP…MNISVAISNP (78 aa). 3 stretches are compositionally biased toward basic and acidic residues: residues 862 to 902, 913 to 922, and 930 to 941; these read EANG…KGDD, QKGDEKKEEE, and SNDDFRKLFLKD. The disordered stretch occupies residues 862-941; that stretch reads EANGEEQKGD…DDFRKLFLKD (80 aa).

The protein resides in the cytoplasm. May be involved in gene regulation during development. Binds RNA. This is RNA-binding protein 4F from Drosophila melanogaster (Fruit fly).